Reading from the N-terminus, the 181-residue chain is Protein Syd (181 aa).

The protein belongs to the Syd family.

It is found in the cell inner membrane. Functionally, interacts with the SecY protein in vivo. May bind preferentially to an uncomplexed state of SecY, thus functioning either as a chelating agent for excess SecY in the cell or as a regulatory factor that negatively controls the translocase function. This chain is Protein Syd, found in Escherichia coli O81 (strain ED1a).